The chain runs to 486 residues: Monocarboxylate transporter 12 (486 aa).

The Cytoplasmic portion of the chain corresponds to 1-9; the sequence is MTKITRVSL. 12 helical membrane-spanning segments follow: residues 10–30, 58–78, 86–106, 115–135, 148–168, 177–197, 253–273, 289–309, 320–340, 353–373, 383–403, and 410–430; these read ASPP…LVTI, AWIH…GSVV, AGIM…SFAT, LGVL…AMVG, IAMS…QLLI, LLIL…MRPI, FVVL…LFVY, AFLM…FGWL, YVCY…LPML, FGYF…EIVG, VVYF…GWLV, and TAAF…LGFV. The Cytoplasmic segment spans residues 431-486; it reads RIVKRMKRTQVPFPVKDSDPKLQLWTNGSVAYSVARELDQKDEEPLPKARSGCNLT.

Belongs to the major facilitator superfamily. Monocarboxylate porter (TC 2.A.1.13) family. In terms of assembly, interacts with isoform 2 of BSG; this interaction is required for its localization to the plasma membrane. As to expression, highly expressed in the lung, liver, kidney, and pancreas. Expressed in eye lens.

The protein resides in the cell membrane. The protein localises to the basolateral cell membrane. It carries out the reaction creatine(in) = creatine(out). The catalysed reaction is guanidinoacetate(in) = guanidinoacetate(out). With respect to regulation, creatine uptake is inhibited by carbonyl cyanide 3-chlorophenylhydrazone (CCCP) and by valinomycin. Its function is as follows. Functions as a transporter for creatine and as well for its precursor guanidinoacetate. Transport of creatine and GAA is independent of resting membrane potential and extracellular Na(+), Cl(-), or pH. Contributes to the process of creatine biosynthesis and distribution. In Mus musculus (Mouse), this protein is Monocarboxylate transporter 12.